The following is a 307-amino-acid chain: Homoserine kinase (307 aa).

92 to 102 (PLARGLGSSAT) contributes to the ATP binding site.

Belongs to the GHMP kinase family. Homoserine kinase subfamily.

The protein resides in the cytoplasm. The catalysed reaction is L-homoserine + ATP = O-phospho-L-homoserine + ADP + H(+). It participates in amino-acid biosynthesis; L-threonine biosynthesis; L-threonine from L-aspartate: step 4/5. Its function is as follows. Catalyzes the ATP-dependent phosphorylation of L-homoserine to L-homoserine phosphate. The chain is Homoserine kinase (thrB) from Microchaete diplosiphon (Fremyella diplosiphon).